A 466-amino-acid chain; its full sequence is Cytochrome b561 and DOMON domain-containing protein At3g59070 (466 aa).

The N-terminal stretch at 1-25 is a signal peptide; it reads MSLSSRATLVVLCCLFMLIPSFTTA. The DOMON domain occupies 57–172; that stretch reads LNSYLHFNYA…TVVNHLWQDG (116 aa). Residues 179 to 380 form the Cytochrome b561 domain; sequence RLGMHAMSGD…MEILQFKKRW (202 aa). The next 3 helical transmembrane spans lie at 219–239, 252–272, and 287–307; these read IHAIVNALSWGILMPIGVMAA, WFYIHVVCQTTGYFSGLIGGL, and TLHTVIGLLLFALGFLQILSL. Heme b contacts are provided by H220, H256, H289, and H325. 2 helical membrane-spanning segments follow: residues 327 to 347 and 355 to 375; these read TMGYIVIVLSIYNIYKGLSIL and IAYTTIICCIAAFAVVMEILQ.

Heme b is required as a cofactor.

The protein localises to the membrane. Functionally, may act as a catecholamine-responsive trans-membrane electron transporter. This Arabidopsis thaliana (Mouse-ear cress) protein is Cytochrome b561 and DOMON domain-containing protein At3g59070.